Here is a 325-residue protein sequence, read N- to C-terminus: Elongation factor P--(R)-beta-lysine ligase (325 aa).

Residue 76 to 78 coordinates substrate; it reads SPE. Residues 100–102 and asparagine 109 contribute to the ATP site; that span reads RNE. Tyrosine 118 is a binding site for substrate. 244-245 lines the ATP pocket; the sequence is EL. Position 251 (glutamate 251) interacts with substrate. ATP is bound at residue glycine 300.

This sequence belongs to the class-II aminoacyl-tRNA synthetase family. EpmA subfamily. In terms of assembly, homodimer.

The catalysed reaction is D-beta-lysine + L-lysyl-[protein] + ATP = N(6)-((3R)-3,6-diaminohexanoyl)-L-lysyl-[protein] + AMP + diphosphate + H(+). Functionally, with EpmB is involved in the beta-lysylation step of the post-translational modification of translation elongation factor P (EF-P). Catalyzes the ATP-dependent activation of (R)-beta-lysine produced by EpmB, forming a lysyl-adenylate, from which the beta-lysyl moiety is then transferred to the epsilon-amino group of a conserved specific lysine residue in EF-P. In Enterobacter sp. (strain 638), this protein is Elongation factor P--(R)-beta-lysine ligase.